We begin with the raw amino-acid sequence, 433 residues long: MVRLNSAAGSRWWAPAMAILAVALSVEAAEVARYDNYRLYRVTPHSEAQLRSVAAMEQASDSLIFLETARKLGDRFDIVVAPHKLADFTETLESDYIPHELIEQNVQRAFDEERVRLTNKRAKGPFDWNDYHTLEEIHAWLDQLASEHPKEVELLDAGRSHQNRTMKGVKLSYGPGRPGVFLEGGIHAREWISPATVTYILNQLLTSEDAKVRALAEKFDWYVFPNANPDGYAYTFQVNRLWRKTRKAYGPFCYGADPNRNWDFHWAEQGTSNNACSDTYHGSEAFSEVETRSLAAFVEKLRGKLGAYIAFHSYSQLLLFPYGHTGEHSPNHQDLNEIAEATVKSLAKRYGTQYKYGNVYDAIYPASGSSVDWSYGAQDVKIAYTYELRPDGDAWNGFVLPPNEIVPTGEETLDSLITLLEESSARGYYDEKH.

An N-terminal signal peptide occupies residues 1–28 (MVRLNSAAGSRWWAPAMAILAVALSVEA). In terms of domain architecture, Peptidase M14 spans 130–423 (DYHTLEEIHA…DSLITLLEES (294 aa)). Zn(2+)-binding residues include H187 and E190. C253 and C276 are disulfide-bonded. H312 serves as a coordination point for Zn(2+). E387 (proton donor/acceptor) is an active-site residue.

The protein belongs to the peptidase M14 family. It depends on Zn(2+) as a cofactor. In terms of tissue distribution, expressed in the posterior midgut in pupae and female adults.

The protein resides in the secreted. Functionally, involved in the digestion of the blood meal. This is Zinc carboxypeptidase A 1 from Anopheles gambiae (African malaria mosquito).